Here is a 506-residue protein sequence, read N- to C-terminus: BTB/POZ domain-containing protein 16 (506 aa).

The BTB domain occupies 150–206 (INDPAVTRVAFALALKNLYMNEVEMTVDNVLGVLASAHILQFNRLFRKCVSTMLNRL).

This Rattus norvegicus (Rat) protein is BTB/POZ domain-containing protein 16 (Btbd16).